A 141-amino-acid polypeptide reads, in one-letter code: ATP synthase epsilon chain, chloroplastic (141 aa).

This sequence belongs to the ATPase epsilon chain family. In terms of assembly, F-type ATPases have 2 components, F(1) - the catalytic core - and F(0) - the membrane proton channel. F(1) has five subunits: alpha(3), beta(3), gamma(1), delta(1), epsilon(1). F(0) has four main subunits: a(1), b(1), b'(1) and c(10-14). The alpha and beta chains form an alternating ring which encloses part of the gamma chain. F(1) is attached to F(0) by a central stalk formed by the gamma and epsilon chains, while a peripheral stalk is formed by the delta, b and b' chains.

Its subcellular location is the plastid. The protein localises to the chloroplast thylakoid membrane. Its function is as follows. F(1)F(0) ATP synthase produces ATP from ADP in the presence of a proton or sodium gradient. F-type ATPases consist of two structural domains, F(1) containing the extramembraneous catalytic core and F(0) containing the membrane proton channel, linked together by a central stalk and a peripheral stalk. During catalysis, ATP synthesis in the catalytic domain of F(1) is coupled via a rotary mechanism of the central stalk subunits to proton translocation. This chain is ATP synthase epsilon chain, chloroplastic, found in Chlamydomonas reinhardtii (Chlamydomonas smithii).